The primary structure comprises 192 residues: Dihydrofolate reductase (192 aa).

In terms of domain architecture, DHFR spans 5 to 191; sequence NVAIIVAALK…FTYNYTLWTR (187 aa). Residues A11 and 18–24 contribute to the NADP(+) site; that span reads GIGYKGK. 32–37 is a binding site for substrate; that stretch reads EIRYFK. NADP(+) is bound at residue 56–58; it reads RKT. R72 contributes to the substrate binding site. 78 to 80 contributes to the NADP(+) binding site; it reads SRS. Substrate contacts are provided by I112 and Y118. 113 to 120 is a binding site for NADP(+); it reads GGAEIYNE.

This sequence belongs to the dihydrofolate reductase family.

The enzyme catalyses (6S)-5,6,7,8-tetrahydrofolate + NADP(+) = 7,8-dihydrofolate + NADPH + H(+). It functions in the pathway cofactor biosynthesis; tetrahydrofolate biosynthesis; 5,6,7,8-tetrahydrofolate from 7,8-dihydrofolate: step 1/1. In terms of biological role, key enzyme in folate metabolism. Catalyzes an essential reaction for de novo glycine and purine synthesis, and for DNA precursor synthesis. In Candida albicans (Yeast), this protein is Dihydrofolate reductase (DFR1).